A 265-amino-acid polypeptide reads, in one-letter code: Diphthine synthase (265 aa).

Residues L9, D85, I88, 113–114 (TA), L168, A211, and H236 contribute to the S-adenosyl-L-methionine site.

This sequence belongs to the diphthine synthase family. As to quaternary structure, homodimer.

The catalysed reaction is 2-[(3S)-amino-3-carboxypropyl]-L-histidyl-[translation elongation factor 2] + 3 S-adenosyl-L-methionine = diphthine-[translation elongation factor 2] + 3 S-adenosyl-L-homocysteine + 3 H(+). It participates in protein modification; peptidyl-diphthamide biosynthesis. Functionally, S-adenosyl-L-methionine-dependent methyltransferase that catalyzes the trimethylation of the amino group of the modified target histidine residue in translation elongation factor 2 (EF-2), to form an intermediate called diphthine. The three successive methylation reactions represent the second step of diphthamide biosynthesis. This is Diphthine synthase from Halorubrum lacusprofundi (strain ATCC 49239 / DSM 5036 / JCM 8891 / ACAM 34).